Here is a 274-residue protein sequence, read N- to C-terminus: 2,3,4,5-tetrahydropyridine-2,6-dicarboxylate N-succinyltransferase (274 aa).

R104 and D141 together coordinate substrate.

Belongs to the transferase hexapeptide repeat family. Homotrimer.

It localises to the cytoplasm. It catalyses the reaction (S)-2,3,4,5-tetrahydrodipicolinate + succinyl-CoA + H2O = (S)-2-succinylamino-6-oxoheptanedioate + CoA. Its pathway is amino-acid biosynthesis; L-lysine biosynthesis via DAP pathway; LL-2,6-diaminopimelate from (S)-tetrahydrodipicolinate (succinylase route): step 1/3. The polypeptide is 2,3,4,5-tetrahydropyridine-2,6-dicarboxylate N-succinyltransferase (Sodalis glossinidius (strain morsitans)).